A 231-amino-acid polypeptide reads, in one-letter code: 7-cyano-7-deazaguanine synthase (231 aa).

Position 8–18 (8–18) interacts with ATP; it reads FSGGQDSTTCL. C188, C197, C200, and C203 together coordinate Zn(2+).

The protein belongs to the QueC family. The cofactor is Zn(2+).

The enzyme catalyses 7-carboxy-7-deazaguanine + NH4(+) + ATP = 7-cyano-7-deazaguanine + ADP + phosphate + H2O + H(+). The protein operates within purine metabolism; 7-cyano-7-deazaguanine biosynthesis. In terms of biological role, catalyzes the ATP-dependent conversion of 7-carboxy-7-deazaguanine (CDG) to 7-cyano-7-deazaguanine (preQ(0)). The polypeptide is 7-cyano-7-deazaguanine synthase (Salmonella schwarzengrund (strain CVM19633)).